The primary structure comprises 325 residues: Lipoyl synthase (325 aa).

The segment at 1-32 is disordered; that stretch reads MPPLADASTETLSPAEQAAVRHPEKAHRPDQP. The segment covering 19–32 has biased composition (basic and acidic residues); that stretch reads AVRHPEKAHRPDQP. 7 residues coordinate [4Fe-4S] cluster: C66, C71, C77, C92, C96, C99, and S305. A Radical SAM core domain is found at 78-294; it reads WAKKHATFMI…AEVANAKGFL (217 aa).

This sequence belongs to the radical SAM superfamily. Lipoyl synthase family. It depends on [4Fe-4S] cluster as a cofactor.

The protein localises to the cytoplasm. It carries out the reaction [[Fe-S] cluster scaffold protein carrying a second [4Fe-4S](2+) cluster] + N(6)-octanoyl-L-lysyl-[protein] + 2 oxidized [2Fe-2S]-[ferredoxin] + 2 S-adenosyl-L-methionine + 4 H(+) = [[Fe-S] cluster scaffold protein] + N(6)-[(R)-dihydrolipoyl]-L-lysyl-[protein] + 4 Fe(3+) + 2 hydrogen sulfide + 2 5'-deoxyadenosine + 2 L-methionine + 2 reduced [2Fe-2S]-[ferredoxin]. Its pathway is protein modification; protein lipoylation via endogenous pathway; protein N(6)-(lipoyl)lysine from octanoyl-[acyl-carrier-protein]: step 2/2. Catalyzes the radical-mediated insertion of two sulfur atoms into the C-6 and C-8 positions of the octanoyl moiety bound to the lipoyl domains of lipoate-dependent enzymes, thereby converting the octanoylated domains into lipoylated derivatives. The sequence is that of Lipoyl synthase from Beijerinckia indica subsp. indica (strain ATCC 9039 / DSM 1715 / NCIMB 8712).